The chain runs to 418 residues: NADH-quinone oxidoreductase subunit D (418 aa).

It belongs to the complex I 49 kDa subunit family. As to quaternary structure, NDH-1 is composed of 14 different subunits. Subunits NuoB, C, D, E, F, and G constitute the peripheral sector of the complex.

The protein localises to the cell inner membrane. It carries out the reaction a quinone + NADH + 5 H(+)(in) = a quinol + NAD(+) + 4 H(+)(out). Its function is as follows. NDH-1 shuttles electrons from NADH, via FMN and iron-sulfur (Fe-S) centers, to quinones in the respiratory chain. The immediate electron acceptor for the enzyme in this species is believed to be ubiquinone. Couples the redox reaction to proton translocation (for every two electrons transferred, four hydrogen ions are translocated across the cytoplasmic membrane), and thus conserves the redox energy in a proton gradient. This is NADH-quinone oxidoreductase subunit D from Neisseria meningitidis serogroup C (strain 053442).